The primary structure comprises 138 residues: Acidic phospholipase A2 CH-E6' (138 aa).

The signal sequence occupies residues 1–16; sequence MRTLWIVAVLLLGVEG. Cystine bridges form between Cys-42/Cys-131, Cys-44/Cys-60, Cys-59/Cys-111, Cys-65/Cys-138, Cys-66/Cys-104, Cys-73/Cys-97, and Cys-91/Cys-102. The Ca(2+) site is built by Tyr-43, Gly-45, and Gly-47. The active site involves His-63. A Ca(2+)-binding site is contributed by Asp-64. Asp-105 is an active-site residue.

The protein belongs to the phospholipase A2 family. Group II subfamily. D49 sub-subfamily. Ca(2+) is required as a cofactor. In terms of tissue distribution, expressed by the venom gland.

The protein localises to the secreted. The catalysed reaction is a 1,2-diacyl-sn-glycero-3-phosphocholine + H2O = a 1-acyl-sn-glycero-3-phosphocholine + a fatty acid + H(+). Snake venom phospholipase A2 (PLA2) that shows high lipolytic and weak ADP-induced platelet aggregation activities. Also shows weak anticoagulant activity. PLA2 catalyzes the calcium-dependent hydrolysis of the 2-acyl groups in 3-sn-phosphoglycerides. This Crotalus horridus (Timber rattlesnake) protein is Acidic phospholipase A2 CH-E6'.